Consider the following 601-residue polypeptide: DNA ligase (601 aa).

D258 contacts ATP. Residue K260 is the N6-AMP-lysine intermediate of the active site. ATP is bound by residues R265, R280, E310, F350, R427, and K433. The segment at 568–601 is disordered; that stretch reads DKSPEDATTTDEILEMYNKQPKKKIESPPIDESV.

Belongs to the ATP-dependent DNA ligase family. Mg(2+) is required as a cofactor.

The enzyme catalyses ATP + (deoxyribonucleotide)n-3'-hydroxyl + 5'-phospho-(deoxyribonucleotide)m = (deoxyribonucleotide)n+m + AMP + diphosphate.. Functionally, DNA ligase that seals nicks in double-stranded DNA during DNA replication, DNA recombination and DNA repair. This is DNA ligase from Saccharolobus islandicus (strain Y.G.57.14 / Yellowstone #1) (Sulfolobus islandicus).